A 381-amino-acid polypeptide reads, in one-letter code: Methanesulfonate monooxygenase (381 aa).

Belongs to the SsuD family.

It carries out the reaction an alkanesulfonate + FMNH2 + O2 = an aldehyde + FMN + sulfite + H2O + 2 H(+). Functionally, catalyzes the desulfonation of aliphatic sulfonates. Shows highest activity with methanesulfonate. The polypeptide is Methanesulfonate monooxygenase (msuD) (Pseudomonas aeruginosa (strain ATCC 15692 / DSM 22644 / CIP 104116 / JCM 14847 / LMG 12228 / 1C / PRS 101 / PAO1)).